The following is a 407-amino-acid chain: Cell division protein FtsZ (407 aa).

Residues 18–22 (GGGVN), 105–107 (GTG), Glu136, Arg140, and Asp184 each bind GTP. Residues 312–407 (FDGGQPPARR…EELDVPDFLK (96 aa)) are disordered. Low complexity-rich tracts occupy residues 336–348 (AAPA…STRP) and 368–377 (APATASGESS). A compositionally biased stretch (pro residues) spans 381-390 (VSPPHVPPAR). Over residues 396–407 (QAEELDVPDFLK) the composition is skewed to acidic residues.

This sequence belongs to the FtsZ family. In terms of assembly, homodimer. Polymerizes to form a dynamic ring structure in a strictly GTP-dependent manner. Interacts directly with several other division proteins.

It localises to the cytoplasm. Its function is as follows. Essential cell division protein that forms a contractile ring structure (Z ring) at the future cell division site. The regulation of the ring assembly controls the timing and the location of cell division. One of the functions of the FtsZ ring is to recruit other cell division proteins to the septum to produce a new cell wall between the dividing cells. Binds GTP and shows GTPase activity. The protein is Cell division protein FtsZ of Streptomyces griseus.